The primary structure comprises 198 residues: ATP-dependent Clp protease proteolytic subunit (198 aa).

Catalysis depends on Ser103, which acts as the Nucleophile. Residue His128 is part of the active site.

This sequence belongs to the peptidase S14 family. Fourteen ClpP subunits assemble into 2 heptameric rings which stack back to back to give a disk-like structure with a central cavity, resembling the structure of eukaryotic proteasomes.

It localises to the cytoplasm. The enzyme catalyses Hydrolysis of proteins to small peptides in the presence of ATP and magnesium. alpha-casein is the usual test substrate. In the absence of ATP, only oligopeptides shorter than five residues are hydrolyzed (such as succinyl-Leu-Tyr-|-NHMec, and Leu-Tyr-Leu-|-Tyr-Trp, in which cleavage of the -Tyr-|-Leu- and -Tyr-|-Trp bonds also occurs).. Cleaves peptides in various proteins in a process that requires ATP hydrolysis. Has a chymotrypsin-like activity. Plays a major role in the degradation of misfolded proteins. The polypeptide is ATP-dependent Clp protease proteolytic subunit (Ruthia magnifica subsp. Calyptogena magnifica).